The primary structure comprises 832 residues: Regulator of drug sensitivity 1 (832 aa).

The segment at residues 15-42 (CLQCKKIKRKCDKLRPACSRCQQNSLQC) is a DNA-binding region (zn(2)-C6 fungal-type).

The protein localises to the nucleus. Functionally, zinc cluster transcription factor involved in resistance to cycloheximide. The sequence is that of Regulator of drug sensitivity 1 (RDS1) from Saccharomyces cerevisiae (strain ATCC 204508 / S288c) (Baker's yeast).